The following is a 68-amino-acid chain: Large ribosomal subunit protein bL35 (68 aa).

This sequence belongs to the bacterial ribosomal protein bL35 family.

The protein is Large ribosomal subunit protein bL35 of Wolbachia pipientis subsp. Culex pipiens (strain wPip).